The chain runs to 307 residues: Aspartate carbamoyltransferase catalytic subunit (307 aa).

The carbamoyl phosphate site is built by Arg-56 and Thr-57. Lys-84 lines the L-aspartate pocket. Arg-106, His-136, and Gln-139 together coordinate carbamoyl phosphate. Residues Arg-169 and Arg-221 each contribute to the L-aspartate site. Residues Ala-262 and Pro-263 each coordinate carbamoyl phosphate.

The protein belongs to the aspartate/ornithine carbamoyltransferase superfamily. ATCase family. Heterododecamer (2C3:3R2) of six catalytic PyrB chains organized as two trimers (C3), and six regulatory PyrI chains organized as three dimers (R2).

It carries out the reaction carbamoyl phosphate + L-aspartate = N-carbamoyl-L-aspartate + phosphate + H(+). The protein operates within pyrimidine metabolism; UMP biosynthesis via de novo pathway; (S)-dihydroorotate from bicarbonate: step 2/3. In terms of biological role, catalyzes the condensation of carbamoyl phosphate and aspartate to form carbamoyl aspartate and inorganic phosphate, the committed step in the de novo pyrimidine nucleotide biosynthesis pathway. This Streptococcus pneumoniae (strain 70585) protein is Aspartate carbamoyltransferase catalytic subunit.